The following is a 1517-amino-acid chain: uncharacterized protein (1517 aa).

Over residues 1–13 (MNQFPNQPGNFGQ) the composition is skewed to polar residues. The tract at residues 1–26 (MNQFPNQPGNFGQNYYKPVQGSIPAN) is disordered. N-linked (GlcNAc...) asparagine glycans are attached at residues Asn35, Asn40, and Asn76. Transmembrane regions (helical) follow at residues 231–251 (AIDFVVSLFGCFIAGVVAVPI), 397–417 (AIGLILGVLHTVFSGYTTVWC), 510–530 (FVPLLCLPEHGGMVISMKDWI), 612–632 (PNIVGEIWVDSPSLSGGFFAL), and 720–740 (VFDCSAFDIFVNSEHLPVVLL). N-linked (GlcNAc...) asparagine glycosylation is present at Asn917. The next 4 helical transmembrane spans lie at 956 to 976 (FVYALYACFYLGLIPIPVPPL), 985 to 1005 (VPAFLFLIKHYYVSAVLVNSE), 1051 to 1071 (VKLDPICLDPAFPALVWAFWS), and 1114 to 1134 (GIGFFHTCLMGVFLGTTTYLL). Asn1178 carries N-linked (GlcNAc...) asparagine glycosylation. Residues 1261 to 1281 (PYALPLLDSGMVPVSTQLAIV) traverse the membrane as a helical segment. A glycan (N-linked (GlcNAc...) asparagine) is linked at Asn1321. 2 consecutive transmembrane segments (helical) span residues 1353–1373 (APVVDMQLLYVLGPIGETFEV) and 1408–1428 (VVVVIEALGQDFLAAIVPVVI).

This sequence to S.pombe SpAC22F3.04.

Its subcellular location is the membrane. This is an uncharacterized protein from Schizosaccharomyces pombe (strain 972 / ATCC 24843) (Fission yeast).